The primary structure comprises 101 residues: NADH-quinone oxidoreductase subunit K (101 aa).

3 consecutive transmembrane segments (helical) span residues 4–24 (LTHF…GIFL), 30–50 (IILL…FIAF), and 61–81 (IFVF…LAIL).

It belongs to the complex I subunit 4L family. NDH-1 is composed of 14 different subunits. Subunits NuoA, H, J, K, L, M, N constitute the membrane sector of the complex.

The protein resides in the cell inner membrane. The enzyme catalyses a quinone + NADH + 5 H(+)(in) = a quinol + NAD(+) + 4 H(+)(out). Functionally, NDH-1 shuttles electrons from NADH, via FMN and iron-sulfur (Fe-S) centers, to quinones in the respiratory chain. The immediate electron acceptor for the enzyme in this species is believed to be ubiquinone. Couples the redox reaction to proton translocation (for every two electrons transferred, four hydrogen ions are translocated across the cytoplasmic membrane), and thus conserves the redox energy in a proton gradient. The sequence is that of NADH-quinone oxidoreductase subunit K from Chromobacterium violaceum (strain ATCC 12472 / DSM 30191 / JCM 1249 / CCUG 213 / NBRC 12614 / NCIMB 9131 / NCTC 9757 / MK).